Consider the following 459-residue polypeptide: Ribulose bisphosphate carboxylase large chain (459 aa).

Positions 1-2 (MS) are excised as a propeptide. The residue at position 3 (P3) is an N-acetylproline. K14 carries the N6,N6,N6-trimethyllysine modification. Residues N123 and T173 each coordinate substrate. Catalysis depends on K175, which acts as the Proton acceptor. Residue K177 participates in substrate binding. Mg(2+)-binding residues include K201, D203, and E204. An N6-carboxylysine modification is found at K201. Residue H294 is the Proton acceptor of the active site. 3 residues coordinate substrate: R295, H327, and S379.

Belongs to the RuBisCO large chain family. Type I subfamily. In terms of assembly, heterohexadecamer of 8 large chains and 8 small chains; disulfide-linked. The disulfide link is formed within the large subunit homodimers. Requires Mg(2+) as cofactor. Post-translationally, the disulfide bond which can form in the large chain dimeric partners within the hexadecamer appears to be associated with oxidative stress and protein turnover.

The protein resides in the plastid. Its subcellular location is the chloroplast. The catalysed reaction is 2 (2R)-3-phosphoglycerate + 2 H(+) = D-ribulose 1,5-bisphosphate + CO2 + H2O. It carries out the reaction D-ribulose 1,5-bisphosphate + O2 = 2-phosphoglycolate + (2R)-3-phosphoglycerate + 2 H(+). Its function is as follows. RuBisCO catalyzes two reactions: the carboxylation of D-ribulose 1,5-bisphosphate, the primary event in carbon dioxide fixation, as well as the oxidative fragmentation of the pentose substrate in the photorespiration process. Both reactions occur simultaneously and in competition at the same active site. The chain is Ribulose bisphosphate carboxylase large chain from Streptopus lanceolatus (Rose twisted stalk).